Here is a 102-residue protein sequence, read N- to C-terminus: Acid shock protein (102 aa).

The first 21 residues, 1-21, serve as a signal peptide directing secretion; that stretch reads MKKVLALVVAAAMGLSSAAFA. The span at 22–41 shows a compositional bias: low complexity; that stretch reads AETATTPAPTATTTKAAPAK. The propeptide occupies 22-58; it reads AETATTPAPTATTTKAAPAKTTHHKKQHKAAPAQKAQ. The interval 22-102 is disordered; sequence AETATTPAPT…PAKPAAQPAA (81 aa). Residues 80–90 are compositionally biased toward basic residues; the sequence is AAKKHAKKHSH. Residues 91-102 are compositionally biased toward low complexity; sequence QQPAKPAAQPAA.

It belongs to the Asr family. Post-translationally, proteolytic processing gives rise to the active protein.

It localises to the periplasm. In terms of biological role, required for growth and/or survival at acidic conditions. In Escherichia coli O17:K52:H18 (strain UMN026 / ExPEC), this protein is Acid shock protein.